A 568-amino-acid polypeptide reads, in one-letter code: Potassium-transporting ATPase potassium-binding subunit (568 aa).

The next 11 membrane-spanning stretches (helical) occupy residues 6–26 (ILQI…IGGF), 64–84 (TGYA…TYLI), 135–155 (IALA…AIAF), 179–199 (LYIL…QGVI), 254–274 (LANL…TYTF), 285–305 (WALL…VYPA), 382–402 (GLYG…LMVG), 419–439 (MVML…AAGI), 459–481 (VLYG…SANT), 488–508 (LGIA…AAAG), and 529–549 (LFVT…FFPA).

Belongs to the KdpA family. As to quaternary structure, the system is composed of three essential subunits: KdpA, KdpB and KdpC.

It localises to the cell inner membrane. In terms of biological role, part of the high-affinity ATP-driven potassium transport (or Kdp) system, which catalyzes the hydrolysis of ATP coupled with the electrogenic transport of potassium into the cytoplasm. This subunit binds the periplasmic potassium ions and delivers the ions to the membrane domain of KdpB through an intramembrane tunnel. This is Potassium-transporting ATPase potassium-binding subunit from Solibacter usitatus (strain Ellin6076).